The sequence spans 199 residues: GTP cyclohydrolase 1 (199 aa).

3 residues coordinate Zn(2+): cysteine 89, histidine 92, and cysteine 161.

The protein belongs to the GTP cyclohydrolase I family. As to quaternary structure, homomer.

It catalyses the reaction GTP + H2O = 7,8-dihydroneopterin 3'-triphosphate + formate + H(+). It functions in the pathway cofactor biosynthesis; 7,8-dihydroneopterin triphosphate biosynthesis; 7,8-dihydroneopterin triphosphate from GTP: step 1/1. In Bifidobacterium longum (strain DJO10A), this protein is GTP cyclohydrolase 1.